The primary structure comprises 225 residues: NAD(P)H-quinone oxidoreductase subunit K, chloroplastic (225 aa).

Cys-43, Cys-44, Cys-108, and Cys-139 together coordinate [4Fe-4S] cluster.

It belongs to the complex I 20 kDa subunit family. As to quaternary structure, NDH is composed of at least 16 different subunits, 5 of which are encoded in the nucleus. [4Fe-4S] cluster is required as a cofactor.

It localises to the plastid. The protein resides in the chloroplast thylakoid membrane. The enzyme catalyses a plastoquinone + NADH + (n+1) H(+)(in) = a plastoquinol + NAD(+) + n H(+)(out). It catalyses the reaction a plastoquinone + NADPH + (n+1) H(+)(in) = a plastoquinol + NADP(+) + n H(+)(out). NDH shuttles electrons from NAD(P)H:plastoquinone, via FMN and iron-sulfur (Fe-S) centers, to quinones in the photosynthetic chain and possibly in a chloroplast respiratory chain. The immediate electron acceptor for the enzyme in this species is believed to be plastoquinone. Couples the redox reaction to proton translocation, and thus conserves the redox energy in a proton gradient. This Amborella trichopoda protein is NAD(P)H-quinone oxidoreductase subunit K, chloroplastic.